Consider the following 211-residue polypeptide: Uridine kinase (211 aa).

12–19 (GGSGSGKT) is a binding site for ATP.

It belongs to the uridine kinase family.

It localises to the cytoplasm. The enzyme catalyses uridine + ATP = UMP + ADP + H(+). It carries out the reaction cytidine + ATP = CMP + ADP + H(+). Its pathway is pyrimidine metabolism; CTP biosynthesis via salvage pathway; CTP from cytidine: step 1/3. The protein operates within pyrimidine metabolism; UMP biosynthesis via salvage pathway; UMP from uridine: step 1/1. The protein is Uridine kinase of Bacillus licheniformis (strain ATCC 14580 / DSM 13 / JCM 2505 / CCUG 7422 / NBRC 12200 / NCIMB 9375 / NCTC 10341 / NRRL NRS-1264 / Gibson 46).